A 1388-amino-acid chain; its full sequence is Rho-associated protein kinase 2 (1388 aa).

Positions 1–24 are disordered; that stretch reads MSRPPPTGKMPGAPEAVSGDGAGA. The Protein kinase domain maps to 92–354; the sequence is YDVVKVIGRG…VEEIKQHPFF (263 aa). Residues 98 to 106 and Lys-121 each bind ATP; that span reads IGRGAFGEV. Asp-214 serves as the catalytic Proton acceptor. The region spanning 357-425 is the AGC-kinase C-terminal domain; the sequence is DQWNWDNIRE…YRENLLLSDS (69 aa). Positions 363-784 are interaction with PPP1R12A; it reads NIRETAAPVV…INELLKQKDV (422 aa). The interval 373-420 is interaction with NPM1; that stretch reads PELSSDIDSSNFDDIEDDKGDVETFPIPKAFVGNQLPFIGFTYYRENL. Thr-414 is subject to Phosphothreonine; by ROCK2. 2 coiled-coil regions span residues 439-1025 and 1053-1131; these read NEES…KQLL and DTDV…IGLD. Residues 497 to 573 form the REM-1 domain; sequence TLRQLEREKA…LDETNALLRT (77 aa). A compositionally biased stretch (basic and acidic residues) spans 512–530; it reads NAEYQRKADHEADKKRNLE. Positions 512-532 are disordered; the sequence is NAEYQRKADHEADKKRNLEND. Tyr-722 carries the phosphotyrosine; by SRC modification. The RhoBD domain maps to 979-1047; the sequence is TSDVANLANE…LAEIMNRKEP (69 aa). Residues 979–1047 form an RHOA binding region; the sequence is TSDVANLANE…LAEIMNRKEP (69 aa). Phosphoserine is present on Ser-1137. The 200-residue stretch at 1150 to 1349 folds into the PH domain; it reads ESRLEGWLSL…WVSRLVKKIP (200 aa). Residue Thr-1212 is modified to Phosphothreonine. The segment at 1260–1315 adopts a Phorbol-ester/DAG-type zinc-finger fold; the sequence is GHEFIPTLYHFPTNCEACMKPLWHMFKPPPALECRRCHIKCHKDHMDKKEEIIAPC. Residues 1345 to 1388 are disordered; sequence VKKIPKKPPAPDPFARSSPRTSMKIQQNQSIRRPSRQLAPNKPS. Phosphoserine is present on residues Ser-1362 and Ser-1374. Polar residues predominate over residues 1362–1376; that stretch reads SPRTSMKIQQNQSIR.

The protein belongs to the protein kinase superfamily. AGC Ser/Thr protein kinase family. Homodimer. Interacts with IRS1. Interacts with RAF1. Interacts with RHOA (activated by GTP). Interacts with RHOB and RHOC. Interacts with PPP1R12A. Interacts with EP300. Interacts with CHORDC1. Interacts with BRCA2. Interacts with NPM1; this interaction enhances ROCK2 activity. Interacts with SORL1. Interacts with PJVK. Mg(2+) serves as cofactor. In terms of processing, autophosphorylated. Phosphorylation at Tyr-722 reduces its binding to RHOA and is crucial for focal adhesion dynamics. Dephosphorylation by PTPN11 stimulates its RHOA binding activity. Post-translationally, cleaved by granzyme B during apoptosis. This leads to constitutive activation of the kinase and membrane blebbing. As to expression, highly expressed in whole brain and in cerebellum, and at lower levels in heart and lung. Detected at low levels in skeletal muscle, spleen, liver, kidney and pancreas.

The protein localises to the cytoplasm. The protein resides in the cell membrane. It is found in the nucleus. Its subcellular location is the cytoskeleton. It localises to the microtubule organizing center. The protein localises to the centrosome. It carries out the reaction L-seryl-[protein] + ATP = O-phospho-L-seryl-[protein] + ADP + H(+). The enzyme catalyses L-threonyl-[protein] + ATP = O-phospho-L-threonyl-[protein] + ADP + H(+). Activated by RHOA binding. Inhibited by Y-27632. Its function is as follows. Protein kinase which is a key regulator of actin cytoskeleton and cell polarity. Involved in regulation of smooth muscle contraction, actin cytoskeleton organization, stress fiber and focal adhesion formation, neurite retraction, cell adhesion and motility via phosphorylation of ADD1, BRCA2, CNN1, EZR, DPYSL2, EP300, MSN, MYL9/MLC2, NPM1, RDX, PPP1R12A and VIM. Phosphorylates SORL1 and IRF4. Acts as a negative regulator of VEGF-induced angiogenic endothelial cell activation. Positively regulates the activation of p42/MAPK1-p44/MAPK3 and of p90RSK/RPS6KA1 during myogenic differentiation. Plays an important role in the timely initiation of centrosome duplication. Inhibits keratinocyte terminal differentiation. May regulate closure of the eyelids and ventral body wall through organization of actomyosin bundles. Plays a critical role in the regulation of spine and synaptic properties in the hippocampus. Plays an important role in generating the circadian rhythm of the aortic myofilament Ca(2+) sensitivity and vascular contractility by modulating the myosin light chain phosphorylation. This Bos taurus (Bovine) protein is Rho-associated protein kinase 2 (ROCK2).